Reading from the N-terminus, the 201-residue chain is uncharacterized protein (201 aa).

Residues 64–78 (DNEIKEEEESEEEEK) are compositionally biased toward acidic residues. Disordered regions lie at residues 64–114 (DNEI…FKNA) and 182–201 (ILPG…LSKQ). The segment covering 96–106 (RNKHGRNRNPR) has biased composition (basic residues). The span at 189–201 (GNTETVDQGLSKQ) shows a compositional bias: polar residues.

This is an uncharacterized protein from Ostreid herpesvirus 1 (isolate France) (OsHV-1).